A 376-amino-acid polypeptide reads, in one-letter code: Probable dual-specificity RNA methyltransferase RlmN (376 aa).

The active-site Proton acceptor is E96. A Radical SAM core domain is found at 102-346; that stretch reads YPDRSTVCVS…CTVRVERGVE (245 aa). An intrachain disulfide couples C109 to C351. 3 residues coordinate [4Fe-4S] cluster: C116, C120, and C123. Residues 171–172, S203, 226–228, and N308 each bind S-adenosyl-L-methionine; these read GE and SLH. C351 acts as the S-methylcysteine intermediate in catalysis.

It belongs to the radical SAM superfamily. RlmN family. [4Fe-4S] cluster is required as a cofactor.

It localises to the cytoplasm. The enzyme catalyses adenosine(2503) in 23S rRNA + 2 reduced [2Fe-2S]-[ferredoxin] + 2 S-adenosyl-L-methionine = 2-methyladenosine(2503) in 23S rRNA + 5'-deoxyadenosine + L-methionine + 2 oxidized [2Fe-2S]-[ferredoxin] + S-adenosyl-L-homocysteine. It carries out the reaction adenosine(37) in tRNA + 2 reduced [2Fe-2S]-[ferredoxin] + 2 S-adenosyl-L-methionine = 2-methyladenosine(37) in tRNA + 5'-deoxyadenosine + L-methionine + 2 oxidized [2Fe-2S]-[ferredoxin] + S-adenosyl-L-homocysteine. Functionally, specifically methylates position 2 of adenine 2503 in 23S rRNA and position 2 of adenine 37 in tRNAs. This Chloroflexus aurantiacus (strain ATCC 29366 / DSM 635 / J-10-fl) protein is Probable dual-specificity RNA methyltransferase RlmN.